Consider the following 90-residue polypeptide: Non-structural protein NS-S (90 aa).

This sequence belongs to the hantavirus NS-S protein family.

The protein resides in the host cytoplasm. It localises to the host perinuclear region. Its function is as follows. Antagonizes host type-I IFN signaling pathway. The protein is Non-structural protein NS-S (N) of Homo sapiens (Human).